The following is a 342-amino-acid chain: 4-hydroxy-3-methylbut-2-enyl diphosphate reductase (342 aa).

Cys-47 serves as a coordination point for [4Fe-4S] cluster. (2E)-4-hydroxy-3-methylbut-2-enyl diphosphate-binding residues include His-78 and His-111. Dimethylallyl diphosphate-binding residues include His-78 and His-111. Isopentenyl diphosphate contacts are provided by His-78 and His-111. Cys-133 is a binding site for [4Fe-4S] cluster. A (2E)-4-hydroxy-3-methylbut-2-enyl diphosphate-binding site is contributed by His-161. His-161 lines the dimethylallyl diphosphate pocket. His-161 contributes to the isopentenyl diphosphate binding site. Glu-163 acts as the Proton donor in catalysis. (2E)-4-hydroxy-3-methylbut-2-enyl diphosphate is bound at residue Thr-201. Cys-231 lines the [4Fe-4S] cluster pocket. Ser-259, Ser-260, Asn-261, and Ser-303 together coordinate (2E)-4-hydroxy-3-methylbut-2-enyl diphosphate. Dimethylallyl diphosphate contacts are provided by Ser-259, Ser-260, Asn-261, and Ser-303. 4 residues coordinate isopentenyl diphosphate: Ser-259, Ser-260, Asn-261, and Ser-303.

The protein belongs to the IspH family. [4Fe-4S] cluster serves as cofactor.

It catalyses the reaction isopentenyl diphosphate + 2 oxidized [2Fe-2S]-[ferredoxin] + H2O = (2E)-4-hydroxy-3-methylbut-2-enyl diphosphate + 2 reduced [2Fe-2S]-[ferredoxin] + 2 H(+). The catalysed reaction is dimethylallyl diphosphate + 2 oxidized [2Fe-2S]-[ferredoxin] + H2O = (2E)-4-hydroxy-3-methylbut-2-enyl diphosphate + 2 reduced [2Fe-2S]-[ferredoxin] + 2 H(+). The protein operates within isoprenoid biosynthesis; dimethylallyl diphosphate biosynthesis; dimethylallyl diphosphate from (2E)-4-hydroxy-3-methylbutenyl diphosphate: step 1/1. It functions in the pathway isoprenoid biosynthesis; isopentenyl diphosphate biosynthesis via DXP pathway; isopentenyl diphosphate from 1-deoxy-D-xylulose 5-phosphate: step 6/6. Functionally, catalyzes the conversion of 1-hydroxy-2-methyl-2-(E)-butenyl 4-diphosphate (HMBPP) into a mixture of isopentenyl diphosphate (IPP) and dimethylallyl diphosphate (DMAPP). Acts in the terminal step of the DOXP/MEP pathway for isoprenoid precursor biosynthesis. The sequence is that of 4-hydroxy-3-methylbut-2-enyl diphosphate reductase from Anaplasma marginale (strain St. Maries).